The following is a 943-amino-acid chain: Conidiophore development regulator abaA (943 aa).

Disordered regions lie at residues 1–69 (MSSS…FNGG) and 111–133 (TSRQ…HQRG). The segment covering 29 to 43 (IDTRRSFHGDSRLPL) has biased composition (basic and acidic residues). The span at 59 to 68 (PSSAHSSFNG) shows a compositional bias: polar residues. Positions 161–254 (QKDKGGVWRR…QVVKKFFEDL (94 aa)) form a DNA-binding region, TEA. Over residues 537–555 (EHQRKKEKRSCGKKPDLER) the composition is skewed to basic and acidic residues. 2 disordered regions span residues 537–575 (EHQR…AAWT) and 809–901 (GAAG…HHPG). The span at 865–889 (DSWTAGSSAGGAPAATPTGPDWGPT) shows a compositional bias: low complexity.

The protein belongs to the TEC1 family.

It is found in the nucleus. Functionally, brlA, abaA and wetA are pivotal regulators of conidiophore development and conidium maturation. They act individually and together to regulate their own expression and that of numerous other sporulation-specific genes. Binds to the sequence 5'-CATTCY-3', where Y is a pyrimidine, making both major- and minor-groove contacts. This Hapsidospora chrysogena (Acremonium chrysogenum) protein is Conidiophore development regulator abaA.